The primary structure comprises 258 residues: Ribosomal RNA small subunit methyltransferase A (258 aa).

H13, L15, G40, E61, D85, and N106 together coordinate S-adenosyl-L-methionine.

This sequence belongs to the class I-like SAM-binding methyltransferase superfamily. rRNA adenine N(6)-methyltransferase family. RsmA subfamily.

The protein resides in the cytoplasm. The enzyme catalyses adenosine(1518)/adenosine(1519) in 16S rRNA + 4 S-adenosyl-L-methionine = N(6)-dimethyladenosine(1518)/N(6)-dimethyladenosine(1519) in 16S rRNA + 4 S-adenosyl-L-homocysteine + 4 H(+). In terms of biological role, specifically dimethylates two adjacent adenosines (A1518 and A1519) in the loop of a conserved hairpin near the 3'-end of 16S rRNA in the 30S particle. May play a critical role in biogenesis of 30S subunits. The chain is Ribosomal RNA small subunit methyltransferase A from Porphyromonas gingivalis (strain ATCC 33277 / DSM 20709 / CIP 103683 / JCM 12257 / NCTC 11834 / 2561).